A 297-amino-acid chain; its full sequence is 6-dehydroglucose reductase (297 aa).

NADP(+) contacts are provided by Trp-20, Arg-21, and Asp-49. Tyr-54 serves as the catalytic Proton donor. The D-glucose site is built by Tyr-54, Lys-98, His-129, and Arg-130. NADP(+) contacts are provided by Ser-159, Asn-160, Gln-181, Ser-211, Leu-213, Gly-215, Gly-261, Thr-262, Asn-263, and Arg-267.

Belongs to the aldo/keto reductase family. In terms of assembly, homotrimer.

It carries out the reaction D-glucose + NADP(+) = 6-dehydro-D-glucose + NADPH + H(+). Functionally, part of the sulfoquinovose monooxygenase (sulfo-SMO) pathway, a D-sulfoquinovose degradation pathway that enables the complete utilization of all carbons within sulfoquinovose (SQ) with concomitant production of inorganic sulfite. Catalyzes the NADP-dependent reduction of 6-dehydro-D-glucose to D-glucose. Cannot use NADH. The sequence is that of 6-dehydroglucose reductase from Agrobacterium fabrum (strain C58 / ATCC 33970) (Agrobacterium tumefaciens (strain C58)).